A 428-amino-acid polypeptide reads, in one-letter code: F-box/LRR-repeat protein 3 (428 aa).

Over residues Met1–Ser21 the composition is skewed to basic and acidic residues. The segment at Met1–Thr27 is disordered. Residues Cys34–Phe81 form the F-box domain. 7 LRR repeats span residues Ser119 to Ser146, Asp181 to Ser207, Cys208 to Tyr233, His234 to Val259, Gly316 to Ala341, Gly343 to Glu368, and Cys369 to Glu394.

In terms of assembly, part of the SCF (SKP1-CUL1-F-box) E3 ubiquitin-protein ligase complex SCF(FBXL3) composed of CUL1, SKP1, RBX1 and FBXL3. Interacts with CRY1 and CRY2 (phosphorylated). Interacts with HDAC3. Interacts with KDM8. Post-translationally, undergoes autophagy-mediated degradation in the liver in a time-dependent manner. As to expression, widely expressed.

Its subcellular location is the nucleus. The protein resides in the cytoplasm. It functions in the pathway protein modification; protein ubiquitination. Functionally, substrate-recognition component of the SCF(FBXL3) E3 ubiquitin ligase complex involved in circadian rhythm function. Plays a key role in the maintenance of both the speed and the robustness of the circadian clock oscillation. The SCF(FBXL3) complex mainly acts in the nucleus and mediates ubiquitination and subsequent degradation of CRY1 and CRY2. Activity of the SCF(FBXL3) complex is counteracted by the SCF(FBXL21) complex. The sequence is that of F-box/LRR-repeat protein 3 (FBXL3) from Homo sapiens (Human).